Reading from the N-terminus, the 4062-residue chain is Transcription-associated protein 1 (4062 aa).

Residues 531 to 562 form a disordered region; the sequence is LASEPSTSEDADESGGDPNKLPPPTKEGKKTS. TPR repeat units lie at residues 1346-1379 and 1677-1714; these read LDGV…LLDI and RRSF…DDEE. Basic and acidic residues predominate over residues 2659–2670; sequence VETEMKREEPEP. A disordered region spans residues 2659-2692; that stretch reads VETEMKREEPEPMEVDEKDSQDDSKDAGEPKEKE. Over residues 2671 to 2680 the composition is skewed to acidic residues; sequence MEVDEKDSQD. Over residues 2681–2692 the composition is skewed to basic and acidic residues; sequence DSKDAGEPKEKE. Positions 2800 to 3411 constitute an FAT domain; sequence LIEFISSKHE…FYHIREAVSV (612 aa). Residues 2847 to 2880 form a TPR 3 repeat; sequence IETLESLGTLYNEISEFDQFAAIWERRAVFPDTM. The PI3K/PI4K catalytic domain occupies 3682-4046; sequence EPNFEIVIKG…DCVSLISRAK (365 aa). A G-loop region spans residues 3688–3694; the sequence is VIKGGQV. The catalytic loop stretch occupies residues 3902–3910; it reads NLTPMGPDQ. An activation loop region spans residues 3922–3950; sequence NPSYRFEIRGGRSLHDIQHFGHEVPFRLT. The FATC domain occupies 4031–4062; it reads AKLRKDDCVSLISRAKDSDNLARMPPTYHAWF.

The protein belongs to the PI3/PI4-kinase family. TRA1 subfamily. As to quaternary structure, interacts with histone acetyltransferase Tip60 homolog mys-1. Probably a component of a complex with histone acetyltransferase (HAT) activity, at least composed of mys-1 and trr-1. In terms of tissue distribution, expressed in germ cells and somatic cells.

It localises to the nucleus. The protein resides in the chromosome. In terms of biological role, influences germ cell fate in hermaphrodites. Acts downstream of tra-2 and tra-3 and through the Tip60 histone acetyltransferase complex to regulate germ cell fate decisions. Required for spermatogenesis and embryonic development. Acts with tra-2 to promote expression of fog-3 and control male tail development. Involved in the negative regulation of vulval development. Involved in the positive regulation of transcription factor daf-16, probably acting by histone acetylation; thereby modulating stress resistance. Plays a role in acetylation of nucleosomal histone H4, probably acting as a component of the Tip60 histone acetyltransferase complex. The chain is Transcription-associated protein 1 from Caenorhabditis elegans.